The chain runs to 326 residues: Biotin synthase (326 aa).

Positions 51 to 278 (NEVQRSTLLS…TSYVRLSAGR (228 aa)) constitute a Radical SAM core domain. The [4Fe-4S] cluster site is built by C66, C70, and C73. C110, C141, C201, and R273 together coordinate [2Fe-2S] cluster.

It belongs to the radical SAM superfamily. Biotin synthase family. Homodimer. [4Fe-4S] cluster serves as cofactor. Requires [2Fe-2S] cluster as cofactor.

It catalyses the reaction (4R,5S)-dethiobiotin + (sulfur carrier)-SH + 2 reduced [2Fe-2S]-[ferredoxin] + 2 S-adenosyl-L-methionine = (sulfur carrier)-H + biotin + 2 5'-deoxyadenosine + 2 L-methionine + 2 oxidized [2Fe-2S]-[ferredoxin]. Its pathway is cofactor biosynthesis; biotin biosynthesis; biotin from 7,8-diaminononanoate: step 2/2. Catalyzes the conversion of dethiobiotin (DTB) to biotin by the insertion of a sulfur atom into dethiobiotin via a radical-based mechanism. This chain is Biotin synthase, found in Azoarcus sp. (strain BH72).